Here is a 190-residue protein sequence, read N- to C-terminus: dTTP/UTP pyrophosphatase (190 aa).

Residue Asp67 is the Proton acceptor of the active site.

Belongs to the Maf family. YhdE subfamily. It depends on a divalent metal cation as a cofactor.

It localises to the cytoplasm. It catalyses the reaction dTTP + H2O = dTMP + diphosphate + H(+). The enzyme catalyses UTP + H2O = UMP + diphosphate + H(+). Its function is as follows. Nucleoside triphosphate pyrophosphatase that hydrolyzes dTTP and UTP. May have a dual role in cell division arrest and in preventing the incorporation of modified nucleotides into cellular nucleic acids. This Aquifex aeolicus (strain VF5) protein is dTTP/UTP pyrophosphatase.